The primary structure comprises 171 residues: S-ribosylhomocysteine lyase (171 aa).

Fe cation is bound by residues His54, His58, and Cys128.

It belongs to the LuxS family. As to quaternary structure, homodimer. Fe cation serves as cofactor.

It carries out the reaction S-(5-deoxy-D-ribos-5-yl)-L-homocysteine = (S)-4,5-dihydroxypentane-2,3-dione + L-homocysteine. Involved in the synthesis of autoinducer 2 (AI-2) which is secreted by bacteria and is used to communicate both the cell density and the metabolic potential of the environment. The regulation of gene expression in response to changes in cell density is called quorum sensing. Catalyzes the transformation of S-ribosylhomocysteine (RHC) to homocysteine (HC) and 4,5-dihydroxy-2,3-pentadione (DPD). This is S-ribosylhomocysteine lyase from Salmonella typhi.